The primary structure comprises 983 residues: Receptor-like protein 19 (983 aa).

The signal sequence occupies residues 1 to 25 (MMKGYITLSFLIILIFNFLDEFAAS). At 26-937 (TRHLCDPDQS…EEDEEEVISW (912 aa)) the chain is on the extracellular side. N-linked (GlcNAc...) asparagine glycans are attached at residues Asn-66 and Asn-102. 31 LRR repeats span residues 82–108 (FGDVIELDLSFSCLRGQLNSNSSLFRL), 111–135 (LRFLTTLDLSNNDFIGQIPSSLETL), 136–159 (SNLTTLDLSRNHFSGRIPSSIGNL), 161–183 (HLIFVDFSHNNFSGQIPSSLGYL), 184–207 (SHLTSFNLSYNNFSGRVPSSIGNL), 209–231 (YLTTLRLSRNSFFGELPSSLGSL), 232–255 (FHLTDLILDTNHFVGKIPSSLGNL), 256–281 (SHLTSIDLHKNNFVGEIPFSLGNLSC), 283–302 (TSFILSDNNIVGEIPSSFGN), 303–327 (LNQLDILNVKSNKLSGSFPIALLNL), 328–351 (RKLSTLSLFNNRLTGTLPSNMSSL), 353–375 (NLKLFDATENHFTGPLPSSLFNI), 376–399 (PSLKTITLENNQLNGSLGFGNISS), 401–424 (SNLTVLRLGNNNFRGPIHRSISKL), 425–448 (VNLKELDLSNYNTQGLVDFTIFSH), 450–474 (KSIEYLNLSHLNTTTTIDMYEILSS), 475–498 (FKLLDTLDLSGSHVSTTNKSSLSN), 501–524 (LVLISQLYLSGCGITEFPKFLRSQ), 525–548 (ELMLTLDISNNKIKGQVPGWLWML), 550–571 (VLNYVNLSNNTFIGFERSTKLG), 578–602 (PPAMRQLFCSNNNFTGNIPSFICEL), 603–628 (PYLSTLDFSNNKFNGSIPTCMGNIQS), 629–652 (PYLQALNLRHNRLSGLLPENIFES), 654–674 (ISLDVGHNQLVGKLPRSLSHI), 675–700 (SSLGLLNVESNKISDTFPLWLSSLQE), 702–720 (QVLVLRSNAFYGPIEKTQF), 721–744 (SKLRIIDISGNQFNGTLPANFFVN), 793–817 (LKVFTVIDFSGNKFEGEIPKSIGLL), 818–840 (KELHVLNLSNNALSGHIASSMGN), 841–865 (LMALESLDVSQNKLSGEIPQELGKL), and 867–890 (YLAYMNFSHNQLVGLLPGGTQFQT). N-linked (GlcNAc...) asparagine glycosylation is found at Asn-137, Asn-158, Asn-171, Asn-190, Asn-195, and Asn-206. N-linked (GlcNAc...) asparagine glycosylation is found at Asn-254 and Asn-278. Asn-347 is a glycosylation site (N-linked (GlcNAc...) asparagine). N-linked (GlcNAc...) asparagine glycans are attached at residues Asn-389, Asn-396, and Asn-402. 4 N-linked (GlcNAc...) asparagine glycosylation sites follow: Asn-456, Asn-461, Asn-492, and Asn-498. Asn-555, Asn-558, Asn-590, and Asn-616 each carry an N-linked (GlcNAc...) asparagine glycan. N-linked (GlcNAc...) asparagine glycosylation is found at Asn-734 and Asn-744. The N-linked (GlcNAc...) asparagine glycan is linked to Asn-824. Asn-872 carries an N-linked (GlcNAc...) asparagine glycan. A helical membrane pass occupies residues 938-958 (IAAVIGFILGTALGLTFGCIL). Residues 959–983 (FSYKPDWFKNPFVRDKRRNIGTITH) are Cytoplasmic-facing.

It belongs to the RLP family.

It is found in the cell membrane. This chain is Receptor-like protein 19, found in Arabidopsis thaliana (Mouse-ear cress).